A 231-amino-acid polypeptide reads, in one-letter code: Small ribosomal subunit protein uS3c (231 aa).

The region spanning Leu39 to Arg123 is the KH type-2 domain.

Belongs to the universal ribosomal protein uS3 family. As to quaternary structure, part of the 30S ribosomal subunit.

Its subcellular location is the plastid. The protein resides in the chloroplast. The polypeptide is Small ribosomal subunit protein uS3c (rps3) (Chlorella vulgaris (Green alga)).